A 185-amino-acid chain; its full sequence is Elongation factor P (185 aa).

This sequence belongs to the elongation factor P family.

It is found in the cytoplasm. Its pathway is protein biosynthesis; polypeptide chain elongation. Involved in peptide bond synthesis. Stimulates efficient translation and peptide-bond synthesis on native or reconstituted 70S ribosomes in vitro. Probably functions indirectly by altering the affinity of the ribosome for aminoacyl-tRNA, thus increasing their reactivity as acceptors for peptidyl transferase. This is Elongation factor P from Nitrosomonas europaea (strain ATCC 19718 / CIP 103999 / KCTC 2705 / NBRC 14298).